The following is a 37-amino-acid chain: Large ribosomal subunit protein bL36 (37 aa).

Belongs to the bacterial ribosomal protein bL36 family.

This chain is Large ribosomal subunit protein bL36, found in Deinococcus geothermalis (strain DSM 11300 / CIP 105573 / AG-3a).